The chain runs to 282 residues: 4-hydroxybenzoate octaprenyltransferase (282 aa).

A run of 9 helical transmembrane segments spans residues 17–37 (IGIL…NQGF), 40–60 (IDLL…GCVI), 90–110 (AFIL…KLPI), 113–133 (FYFA…KRFF), 135–155 (APQL…FIAS), 163–183 (FIVL…MYAM), 207–227 (LIIA…AINK), 231–251 (CFFY…LKLI), and 262–282 (AFLV…LALI).

It belongs to the UbiA prenyltransferase family. Requires Mg(2+) as cofactor.

Its subcellular location is the cell inner membrane. The enzyme catalyses all-trans-octaprenyl diphosphate + 4-hydroxybenzoate = 4-hydroxy-3-(all-trans-octaprenyl)benzoate + diphosphate. Its pathway is cofactor biosynthesis; ubiquinone biosynthesis. Its function is as follows. Catalyzes the prenylation of para-hydroxybenzoate (PHB) with an all-trans polyprenyl group. Mediates the second step in the final reaction sequence of ubiquinone-8 (UQ-8) biosynthesis, which is the condensation of the polyisoprenoid side chain with PHB, generating the first membrane-bound Q intermediate 3-octaprenyl-4-hydroxybenzoate. The polypeptide is 4-hydroxybenzoate octaprenyltransferase (Legionella pneumophila (strain Lens)).